The chain runs to 1467 residues: Neuropathy target esterase sws (1467 aa).

Over 1 to 34 (MDVLEMLRASASGSYNTIFSDAWCQYVSKQITAT) the chain is Lumenal. The chain crosses the membrane as a helical span at residues 35–55 (MYMYCAFGLMGVLFLAWFMYF). Residues 56-1467 (KRLARLRLRD…RSSTYNETKN (1412 aa)) are Cytoplasmic-facing. A nucleoside 3',5'-cyclic phosphate is bound at residue 174-301 (IFGHFEKPIF…IRVIQVIMIR (128 aa)). 2 disordered regions span residues 332 to 353 (TMSGPINSQTSQSSRQATANGP) and 372 to 416 (MGMG…SVHG). Residues 339–350 (SQTSQSSRQATA) are compositionally biased toward low complexity. Phosphoserine occurs at positions 450 and 459. Residues 488-615 (ELGL…VVRR) and 604-731 (IVLD…LSHR) each bind a nucleoside 3',5'-cyclic phosphate. In terms of domain architecture, PNPLA spans 958–1124 (LVLGGGGARG…VNNLPGHLWR (167 aa)). A GXGXXG motif is present at residues 962–967 (GGGARG). The GXSXG signature appears at 989 to 993 (GVSIG). S991 serves as the catalytic Nucleophile. The active-site Proton acceptor is D1111. A DGA/G motif is present at residues 1111–1113 (DGG). Phosphoserine is present on S1205. Residues 1377 to 1467 (RKMDKSTQST…RSSTYNETKN (91 aa)) are disordered. Residues 1382-1393 (STQSTPPTSSRA) are compositionally biased toward polar residues. Composition is skewed to basic and acidic residues over residues 1396-1406 (RGKEEARHMDN) and 1448-1458 (LADKDEDKENR).

This sequence belongs to the NTE family. In terms of assembly, interacts with Pka-C3; interaction inhibits the catalytic function of Pka-C3 and the esterase activity of sws.

It is found in the endoplasmic reticulum membrane. The catalysed reaction is a 1-acyl-sn-glycero-3-phosphocholine + H2O = sn-glycerol 3-phosphocholine + a fatty acid + H(+). In terms of biological role, phospholipase B that deacylates intracellular phosphatidylcholine (PtdCho), generating glycerophosphocholine (GroPtdCho). This deacylation occurs at both sn-2 and sn-1 positions of PtdCho. Its specific chemical modification by certain organophosphorus (OP) compounds leads to distal axonopathy. Plays a role in the signaling mechanism between neurons and glia that regulates glia wrapping during development of the adult brain. Essential for membrane lipid homeostasis and cell survival in both neurons and glia of the adult brain. The chain is Neuropathy target esterase sws from Drosophila yakuba (Fruit fly).